The primary structure comprises 383 residues: MRLLKSNSLLRLVNSYLVDSPQPGNLSYMWNFGSLLAVCLVIQILTGCFLAMHYTAHVDLAFNSVEHIMRDVNNGWLIRYTHANVASFFFIFVYCHIARGLYYGSFKEPRTLTWSIGVIILILMMAIAFLGYVLPFGQMSLWGATVITNLMSAIPVYGQDIVELIWGGFSVSNATLNRFFSLHYILPFLLAALAVAHMIALHVHGSGNPNGLNAGDDRFPMHPYFIFKDLVTIFAFLLVLSIFVCFYPNALGHSDNYIPANPMVTPASIVPEWYLLPFYAILRSIPNKLLGVIAMFGSLLILLVLPLTDLSRVRGNQFRPLMKLSFWFFVVDFIILMWIGAEHPASPYLEVGQIATAFYFAWFVFIVPAVGLFENTMADINKL.

4 consecutive transmembrane segments (helical) span residues 32–52, 76–98, 113–133, and 179–199; these read FGSL…FLAM, WLIR…CHIA, TWSI…LGYV, and FFSL…AHMI. The heme b site is built by His-82 and His-96. Heme b-binding residues include His-183 and His-197. His-202 is an a ubiquinone binding site. Helical transmembrane passes span 225-245, 289-309, 321-341, and 348-368; these read FIFK…IFVC, LLGV…PLTD, LMKL…WIGA, and YLEV…FIVP.

It belongs to the cytochrome b family. As to quaternary structure, fungal cytochrome b-c1 complex contains 10 subunits; 3 respiratory subunits, 2 core proteins and 5 low-molecular weight proteins. Cytochrome b-c1 complex is a homodimer. Requires heme b as cofactor.

The protein localises to the mitochondrion inner membrane. Component of the ubiquinol-cytochrome c reductase complex (complex III or cytochrome b-c1 complex) that is part of the mitochondrial respiratory chain. The b-c1 complex mediates electron transfer from ubiquinol to cytochrome c. Contributes to the generation of a proton gradient across the mitochondrial membrane that is then used for ATP synthesis. The chain is Cytochrome b (cob) from Schizophyllum commune (Split gill fungus).